Consider the following 170-residue polypeptide: Cathelicidin antimicrobial peptide (170 aa).

Residues 1–30 (MKTQRDGPSLGRWSLVLLLLGLTMPLAVIA) form the signal peptide. A propeptide spans 31–131 (RVLSYQEAVL…DISCDKDKRK (101 aa)) (cathelin-like domain (CLD)). 2 disulfide bridges follow: Cys86–Cys97 and Cys108–Cys125. The tract at residues 150 to 162 (LKNIGQRIKDFFG) is active core.

It belongs to the cathelicidin family. As to quaternary structure, monomer, homodimer or homotrimer (in vitro). Oligomerizes as tetra- or hexamer in solution (in vitro). In terms of processing, proteolytically cleaved by proteinase PRTN3 into antibacterial peptide LL-37. Proteolytically cleaved by cathepsin CTSG and neutrophil elastase ELANE. Resistant to proteolytic degradation in solution, and when bound to both zwitterionic (mimicking mammalian membranes) and negatively charged membranes (mimicking bacterial membranes). Post-translationally, after secretion onto the skin surface, the CAMP gene product is processed by a serine protease-dependent mechanism into multiple novel antimicrobial peptides distinct from and shorter than cathelicidin LL-37. These peptides show enhanced antimicrobial action, acquiring the ability to kill skin pathogens such as S.aureus, E.coli and C.albicans. These peptides have lost the ability to stimulate CXCL8/IL8 release from keratinocytes. The peptides act synergistically, killing bacteria at lower concentrations when present together, and maintain activity at increased salt condition.

It is found in the secreted. The protein resides in the vesicle. Functionally, antimicrobial protein that is an integral component of the innate immune system. Binds to bacterial lipopolysaccharides (LPS). Acts via neutrophil N-formyl peptide receptors to enhance the release of CXCL2. Postsecretory processing generates multiple cathelicidin antimicrobial peptides with various lengths which act as a topical antimicrobial defense in sweat on skin. The unprocessed precursor form, cathelicidin antimicrobial peptide, inhibits the growth of Gram-negative E.coli and E.aerogenes with efficiencies comparable to that of the mature peptide LL-37 (in vitro). In terms of biological role, antimicrobial peptide that is an integral component of the innate immune system. Binds to bacterial lipopolysaccharides (LPS). Causes membrane permeabilization by forming transmembrane pores (in vitro). Causes lysis of E.coli. Exhibits antimicrobial activity against Gram-negative bacteria such as P.aeruginosa, S.typhimurium, E.aerogenes, E.coli and P.syringae, Gram-positive bacteria such as L.monocytogenes, S.epidermidis, S.pyogenes and S.aureus, as well as vancomycin-resistant enterococci (in vitro). Exhibits antimicrobial activity against methicillin-resistant S.aureus, P.mirabilis, and C.albicans in low-salt media, but not in media containing 100 mM NaCl (in vitro). Forms chiral supramolecular assemblies with quinolone signal (PQS) molecules of P.aeruginosa, which may lead to interference of bacterial quorum signaling and perturbance of bacterial biofilm formation. May form supramolecular fiber-like assemblies on bacterial membranes. Induces cytokine and chemokine producation as well as TNF/TNFA and CSF2/GMCSF production in normal human keratinocytes. Exhibits hemolytic activity against red blood cells. Exhibits antimicrobial activity against E.coli and B.megaterium (in vitro). This is Cathelicidin antimicrobial peptide from Ateles fusciceps robustus (Colombian black-faced spider monkey).